We begin with the raw amino-acid sequence, 408 residues long: Peptidase T (408 aa).

H78 lines the Zn(2+) pocket. D80 is an active-site residue. D141 contacts Zn(2+). E175 serves as the catalytic Proton acceptor. Zn(2+) contacts are provided by E176, D198, and H380.

Belongs to the peptidase M20B family. It depends on Zn(2+) as a cofactor.

The protein resides in the cytoplasm. It carries out the reaction Release of the N-terminal residue from a tripeptide.. Functionally, cleaves the N-terminal amino acid of tripeptides. The chain is Peptidase T from Clostridium botulinum (strain Langeland / NCTC 10281 / Type F).